The chain runs to 805 residues: Probable phosphoketolase (805 aa).

It belongs to the XFP family. Requires thiamine diphosphate as cofactor.

The sequence is that of Probable phosphoketolase from Synechocystis sp. (strain ATCC 27184 / PCC 6803 / Kazusa).